Here is a 570-residue protein sequence, read N- to C-terminus: Peptidyl-prolyl cis-trans isomerase FKBP9 (570 aa).

Positions 1-24 (MAFGARGWRRWSLLLLLLWVTGQA) are cleaved as a signal peptide. PPIase FKBP-type domains lie at 54–142 (GDFV…VDIW), 166–254 (SDFV…LDLH), 278–365 (GDFL…IDFH), and 389–477 (GDYL…LELV). Residues N174, N286, N302, and N397 are each glycosylated (N-linked (GlcNAc...) asparagine). EF-hand domains lie at 488–523 (WNGEVSPNLFEEIDKDGNGEVLLEEFSEYIHAQVAS) and 533–568 (NAEMIVKNMFTNQDRNGDGKVTAEEFKLKDQETKHD). D501, D503, N505, E507, E512, D546, N548, D550, K552, and E557 together coordinate Ca(2+). Positions 567–570 (HDEL) match the Prevents secretion from ER motif.

Post-translationally, phosphorylated.

The protein resides in the endoplasmic reticulum lumen. It catalyses the reaction [protein]-peptidylproline (omega=180) = [protein]-peptidylproline (omega=0). Inhibited by FK506. Its function is as follows. PPIases accelerate the folding of proteins during protein synthesis. The protein is Peptidyl-prolyl cis-trans isomerase FKBP9 (Fkbp9) of Rattus norvegicus (Rat).